A 485-amino-acid polypeptide reads, in one-letter code: Aspartyl/glutamyl-tRNA(Asn/Gln) amidotransferase subunit B (485 aa).

This sequence belongs to the GatB/GatE family. GatB subfamily. In terms of assembly, heterotrimer of A, B and C subunits.

The catalysed reaction is L-glutamyl-tRNA(Gln) + L-glutamine + ATP + H2O = L-glutaminyl-tRNA(Gln) + L-glutamate + ADP + phosphate + H(+). It carries out the reaction L-aspartyl-tRNA(Asn) + L-glutamine + ATP + H2O = L-asparaginyl-tRNA(Asn) + L-glutamate + ADP + phosphate + 2 H(+). In terms of biological role, allows the formation of correctly charged Asn-tRNA(Asn) or Gln-tRNA(Gln) through the transamidation of misacylated Asp-tRNA(Asn) or Glu-tRNA(Gln) in organisms which lack either or both of asparaginyl-tRNA or glutaminyl-tRNA synthetases. The reaction takes place in the presence of glutamine and ATP through an activated phospho-Asp-tRNA(Asn) or phospho-Glu-tRNA(Gln). The chain is Aspartyl/glutamyl-tRNA(Asn/Gln) amidotransferase subunit B from Borrelia turicatae (strain 91E135).